Reading from the N-terminus, the 87-residue chain is Chaperone NapD (87 aa).

It belongs to the NapD family. In terms of assembly, interacts with the cytoplasmic NapA precursor.

It localises to the cytoplasm. In terms of biological role, chaperone for NapA, the catalytic subunit of the periplasmic nitrate reductase. It binds directly and specifically to the twin-arginine signal peptide of NapA, preventing premature interaction with the Tat translocase and premature export. The sequence is that of Chaperone NapD from Escherichia coli O157:H7.